Consider the following 829-residue polypeptide: Protein roadkill (829 aa).

Composition is skewed to low complexity over residues 24 to 36 (EQQQ…QQQQ), 122 to 140 (TPAA…QAAP), and 266 to 288 (SSSS…SSSS). 4 disordered regions span residues 24–47 (EQQQ…CCEN), 106–142 (SSLQ…APSV), 266–296 (SSSS…SHHS), and 313–400 (HLNQ…NQQQ). The segment covering 313–322 (HLNQQQHHHP) has biased composition (basic residues). Low complexity-rich tracts occupy residues 323-353 (LSAS…QQQH), 372-382 (SSSSSSSSSSS), and 389-400 (SSSSSNSNNQQQ). One can recognise an MATH domain in the interval 486 to 616 (KFSYMWTINN…EDKLTIFCEV (131 aa)). The 68-residue stretch at 655-722 (SDVTLSVGGR…IYTGKAPNLE (68 aa)) folds into the BTB domain.

It belongs to the Tdpoz family. In terms of assembly, interacts with ci and gft/CUL3. Expressed near the anterio-posterior compartment boundary of antenna, leg and wing disks.

It is found in the nucleus. It functions in the pathway protein modification; protein ubiquitination. Its function is as follows. Involved in segment polarity. In complex with gft/CUL3, promotes ubiquitination of ci and its subsequent degradation by the proteasome, which results in hh signaling attenuation. This regulation may be important during eye formation for proper packing of ommatidia into a hexagonal array. In Drosophila melanogaster (Fruit fly), this protein is Protein roadkill (rdx).